A 369-amino-acid chain; its full sequence is Anhydro-N-acetylmuramic acid kinase (369 aa).

Position 9–16 (Gly9–Asp16) interacts with ATP.

The protein belongs to the anhydro-N-acetylmuramic acid kinase family.

The catalysed reaction is 1,6-anhydro-N-acetyl-beta-muramate + ATP + H2O = N-acetyl-D-muramate 6-phosphate + ADP + H(+). Its pathway is amino-sugar metabolism; 1,6-anhydro-N-acetylmuramate degradation. It functions in the pathway cell wall biogenesis; peptidoglycan recycling. In terms of biological role, catalyzes the specific phosphorylation of 1,6-anhydro-N-acetylmuramic acid (anhMurNAc) with the simultaneous cleavage of the 1,6-anhydro ring, generating MurNAc-6-P. Is required for the utilization of anhMurNAc either imported from the medium or derived from its own cell wall murein, and thus plays a role in cell wall recycling. This Phenylobacterium zucineum (strain HLK1) protein is Anhydro-N-acetylmuramic acid kinase.